The primary structure comprises 142 residues: Large ribosomal subunit protein uL11 (142 aa).

The protein belongs to the universal ribosomal protein uL11 family. In terms of assembly, part of the ribosomal stalk of the 50S ribosomal subunit. Interacts with L10 and the large rRNA to form the base of the stalk. L10 forms an elongated spine to which L12 dimers bind in a sequential fashion forming a multimeric L10(L12)X complex. Post-translationally, one or more lysine residues are methylated.

Forms part of the ribosomal stalk which helps the ribosome interact with GTP-bound translation factors. This Pseudoalteromonas atlantica (strain T6c / ATCC BAA-1087) protein is Large ribosomal subunit protein uL11.